Consider the following 572-residue polypeptide: Proline--tRNA ligase (572 aa).

This sequence belongs to the class-II aminoacyl-tRNA synthetase family. ProS type 1 subfamily. Homodimer.

Its subcellular location is the cytoplasm. It carries out the reaction tRNA(Pro) + L-proline + ATP = L-prolyl-tRNA(Pro) + AMP + diphosphate. Catalyzes the attachment of proline to tRNA(Pro) in a two-step reaction: proline is first activated by ATP to form Pro-AMP and then transferred to the acceptor end of tRNA(Pro). As ProRS can inadvertently accommodate and process non-cognate amino acids such as alanine and cysteine, to avoid such errors it has two additional distinct editing activities against alanine. One activity is designated as 'pretransfer' editing and involves the tRNA(Pro)-independent hydrolysis of activated Ala-AMP. The other activity is designated 'posttransfer' editing and involves deacylation of mischarged Ala-tRNA(Pro). The misacylated Cys-tRNA(Pro) is not edited by ProRS. The protein is Proline--tRNA ligase of Escherichia coli O127:H6 (strain E2348/69 / EPEC).